A 59-amino-acid chain; its full sequence is Small ribosomal subunit protein bS21A (59 aa).

It belongs to the bacterial ribosomal protein bS21 family.

The polypeptide is Small ribosomal subunit protein bS21A (Gloeobacter violaceus (strain ATCC 29082 / PCC 7421)).